The following is a 350-amino-acid chain: Arabinogalactan endo-beta-1,4-galactanase A (350 aa).

An N-terminal signal peptide occupies residues 1–16 (MIYPLLLSALPLLSSA). Asparagine 128 is a glycosylation site (N-linked (GlcNAc...) asparagine). Glutamate 152 acts as the Proton donor in catalysis. The active-site Nucleophile is glutamate 262.

This sequence belongs to the glycosyl hydrolase 53 family.

The protein localises to the secreted. It carries out the reaction The enzyme specifically hydrolyzes (1-&gt;4)-beta-D-galactosidic linkages in type I arabinogalactans.. Its function is as follows. Endogalactanase involved in the degradation of plant cell wall polysaccharides, and more particularly of hairy regions of pectin. The chain is Arabinogalactan endo-beta-1,4-galactanase A (galA) from Aspergillus niger.